A 350-amino-acid polypeptide reads, in one-letter code: Phenylalanine--tRNA ligase alpha subunit (350 aa).

E271 serves as a coordination point for Mg(2+).

It belongs to the class-II aminoacyl-tRNA synthetase family. Phe-tRNA synthetase alpha subunit type 1 subfamily. As to quaternary structure, tetramer of two alpha and two beta subunits. Mg(2+) is required as a cofactor.

It localises to the cytoplasm. It catalyses the reaction tRNA(Phe) + L-phenylalanine + ATP = L-phenylalanyl-tRNA(Phe) + AMP + diphosphate + H(+). The protein is Phenylalanine--tRNA ligase alpha subunit of Acidovorax ebreus (strain TPSY) (Diaphorobacter sp. (strain TPSY)).